The sequence spans 89 residues: uncharacterized protein (89 aa).

A helical transmembrane segment spans residues 28–50 (LYLDLGFSALLFYNSNLLFSFIL).

The protein resides in the membrane. This is an uncharacterized protein from Archaeoglobus fulgidus (strain ATCC 49558 / DSM 4304 / JCM 9628 / NBRC 100126 / VC-16).